Reading from the N-terminus, the 284-residue chain is Gigasin-3a (284 aa).

A disordered region spans residues Gly-202 to Asn-284. The segment covering Ser-223–Ser-245 has biased composition (low complexity). A compositionally biased stretch (basic residues) spans Arg-246–Asn-257. Positions Lys-258–Arg-267 are enriched in polar residues. Positions Asn-268–Asn-284 are enriched in basic residues.

As to expression, component of the organic matrix of calcified shell layers.

This Magallana gigas (Pacific oyster) protein is Gigasin-3a.